The primary structure comprises 178 residues: Thioredoxin F1, chloroplastic (178 aa).

The segment at 1–22 is disordered; it reads MPLSLRLSPSPTALSPTTGGFG. Residues 1–57 constitute a chloroplast transit peptide; it reads MPLSLRLSPSPTALSPTTGGFGPSRKQCRIPYSGVPTTKIGFCSLDSRKRGDSSVVR. Residues 7 to 18 show a composition bias toward polar residues; it reads LSPSPTALSPTT. Positions 58-174 constitute a Thioredoxin domain; it reads CSLETVNVSV…LVAAIETARS (117 aa). Active-site nucleophile residues include Cys99 and Cys102. Cys99 and Cys102 are disulfide-bonded. Cys126 is modified (S-glutathionyl cysteine; transient).

This sequence belongs to the thioredoxin family. Plant F-type subfamily. Post-translationally, glutathionylation at Cys-126 decreases its ability to be reduced by ferredoxin-thioredoxin reductase and reduces its efficiency in activating target chloroplastic enzymes.

It is found in the plastid. The protein resides in the chloroplast stroma. Functionally, thiol-disulfide oxidoreductase involved in the redox regulation of enzymes of both reductive pentose phosphate pathway (Calvin-Benson cycle) and oxidative pentose phosphate pathway. Under light or reducing conditions, activates in chloroplast the glyceraldehyde-3-phosphate dehydrogenase, the phosphoribulokinase and the fructose-1,6-bisphosphate phosphatase, and inhibits the glucose-6-phosphate dehydrogenase. This chain is Thioredoxin F1, chloroplastic, found in Arabidopsis thaliana (Mouse-ear cress).